Reading from the N-terminus, the 178-residue chain is Large ribosomal subunit protein uL6 (178 aa).

This sequence belongs to the universal ribosomal protein uL6 family. As to quaternary structure, part of the 50S ribosomal subunit.

Functionally, this protein binds to the 23S rRNA, and is important in its secondary structure. It is located near the subunit interface in the base of the L7/L12 stalk, and near the tRNA binding site of the peptidyltransferase center. The protein is Large ribosomal subunit protein uL6 of Corynebacterium diphtheriae (strain ATCC 700971 / NCTC 13129 / Biotype gravis).